Here is a 380-residue protein sequence, read N- to C-terminus: MRKNCDISTVVVQIDEFGIYIGNASDKEPTWKVDLVPYKQSWVPISIVTTIIQRYCLNTFNCLAEIVRVVLVLDIFVTRKQKKELCDGLFNTLNVPITLWICAPLTAILSTSTRDAIIVDIGMKETKFIVILDLCILMHYTKTSKRSLSTVLERMADCFKLNNKKNSQKLLEDEEFAVTEALMKSLLKSRVPSKPTEELYQLTDQEAYFRYSDILPLAETTCQTNKTERGSSFNDAEKIRVPSWIANAGIEALFEGSDAGGSDIADQALPNVLLSLYRILPIDIRRIMSKLIVFNGILPSLPGWYQRFQNEMTSRGLAIKAVPGQTTADMMAWNGASTTCESQLDYDPDDPKHLRHSIVESPLLYGQDQYFNGENAPEWW.

This sequence belongs to the actin family. ARP10 subfamily.

It is found in the cytoplasm. The protein localises to the cytoskeleton. The protein resides in the nucleus. The protein is Actin-like protein arp10 (arp10) of Schizosaccharomyces pombe (strain 972 / ATCC 24843) (Fission yeast).